The sequence spans 239 residues: UPF0641 membrane protein YHR140W (239 aa).

Over 1 to 11 (MMSCLVPTRFT) the chain is Cytoplasmic. A helical membrane pass occupies residues 12–31 (LTLNTACLLTSTWGFVRATS). Over 32–45 (VVLPPSLSKAGHKQ) the chain is Lumenal. A helical membrane pass occupies residues 46-66 (FLTIISIIATIINNAVNISNY). The Cytoplasmic portion of the chain corresponds to 67 to 99 (YIQRNNKMNLETKKKSDFISRHVTLPVSLVLES). Residues 100–120 (IVATVYWPLRLFFVNLIMHGV) form a helical membrane-spanning segment. Residues 121-125 (ESTAK) are Lumenal-facing. Residues 126–146 (TPFPMTVDMAIHLYPILYLLA) form a helical membrane-spanning segment. Residues 147-162 (DHYLSGSGTKFKLSNK) lie on the Cytoplasmic side of the membrane. Residues 163 to 183 (HAWLIVTSLAFSYFQYLAFLI) traverse the membrane as a helical segment. Residues 184 to 204 (DAGQGQAYPYPFLDVNEPYKS) lie on the Lumenal side of the membrane. The helical transmembrane segment at 205–225 (IIFVVVATITWAYYVFYQKFP) threads the bilayer. Residues 226–239 (PKYIKKSAKKGDKN) are Cytoplasmic-facing.

The protein belongs to the UPF0641 family.

The protein localises to the endoplasmic reticulum membrane. This is UPF0641 membrane protein YHR140W from Saccharomyces cerevisiae (strain ATCC 204508 / S288c) (Baker's yeast).